The chain runs to 53 residues: Conotoxin Cal22e (53 aa).

The propeptide occupies 1–5 (GRPSA).

Contains 4 disulfide bonds. In terms of tissue distribution, expressed by the venom duct.

It localises to the secreted. Its function is as follows. Probable neurotoxin with unknown target. Possibly targets ion channels. The polypeptide is Conotoxin Cal22e (Californiconus californicus (California cone)).